The chain runs to 195 residues: Thymidylate kinase (195 aa).

7–14 (GIDGVGKS) contributes to the ATP binding site.

This sequence belongs to the thymidylate kinase family.

The enzyme catalyses dTMP + ATP = dTDP + ADP. Its function is as follows. Phosphorylation of dTMP to form dTDP in both de novo and salvage pathways of dTTP synthesis. The chain is Thymidylate kinase from Campylobacter hominis (strain ATCC BAA-381 / DSM 21671 / CCUG 45161 / LMG 19568 / NCTC 13146 / CH001A).